The chain runs to 130 residues: Small ribosomal subunit protein uS8 (130 aa).

It belongs to the universal ribosomal protein uS8 family. Part of the 30S ribosomal subunit. Contacts proteins S5 and S12.

One of the primary rRNA binding proteins, it binds directly to 16S rRNA central domain where it helps coordinate assembly of the platform of the 30S subunit. The sequence is that of Small ribosomal subunit protein uS8 from Aliivibrio fischeri (strain MJ11) (Vibrio fischeri).